A 144-amino-acid polypeptide reads, in one-letter code: Small ribosomal subunit protein bS6 (144 aa).

The segment at 92–144 (KVDGHDEGPSVQMQKRDDRGDREERGDRGDRGDRGPRGDRGPREDRGPRPERR) is disordered. A compositionally biased stretch (basic and acidic residues) spans 93–144 (VDGHDEGPSVQMQKRDDRGDREERGDRGDRGDRGPRGDRGPREDRGPRPERR).

Belongs to the bacterial ribosomal protein bS6 family.

Its function is as follows. Binds together with bS18 to 16S ribosomal RNA. The protein is Small ribosomal subunit protein bS6 (rpsF) of Rhodobacter capsulatus (strain ATCC BAA-309 / NBRC 16581 / SB1003).